Consider the following 506-residue polypeptide: Glutamate--tRNA ligase (506 aa).

Residues 12-22 (PSPTGDPHVGT) carry the 'HIGH' region motif. Residues 253 to 257 (KLSKR) carry the 'KMSKS' region motif. An ATP-binding site is contributed by lysine 256.

It belongs to the class-I aminoacyl-tRNA synthetase family. Glutamate--tRNA ligase type 1 subfamily. In terms of assembly, monomer.

Its subcellular location is the cytoplasm. It carries out the reaction tRNA(Glu) + L-glutamate + ATP = L-glutamyl-tRNA(Glu) + AMP + diphosphate. Catalyzes the attachment of glutamate to tRNA(Glu) in a two-step reaction: glutamate is first activated by ATP to form Glu-AMP and then transferred to the acceptor end of tRNA(Glu). The protein is Glutamate--tRNA ligase of Chlamydia trachomatis serovar A (strain ATCC VR-571B / DSM 19440 / HAR-13).